Here is a 245-residue protein sequence, read N- to C-terminus: MLPLLIALQFLTSLPIRLPAMPTPRQQGRSLLHYPAVGLFLGALLWLAALLLEGASPLLQAALLLALWVALTGALHLDGLADSADAWLGGFGDPARTLEIMKDPRSGPVAVVVLVIMLLLKFSALLVVLQAQQPAALVLAPLLGRAALLALFLCTPYVRPNGLGQALAANLPRSRALMVLALVVIGCLLLGATGLLALTLAGVTFLLARRAMLRRLGGTTGDTAGALLELVECAVLVGLALQVGR.

Helical transmembrane passes span L31–L51, P57–L77, V109–L129, P134–C154, and A176–L196.

It belongs to the CobS family. Mg(2+) serves as cofactor.

Its subcellular location is the cell inner membrane. It carries out the reaction alpha-ribazole + adenosylcob(III)inamide-GDP = adenosylcob(III)alamin + GMP + H(+). It catalyses the reaction alpha-ribazole 5'-phosphate + adenosylcob(III)inamide-GDP = adenosylcob(III)alamin 5'-phosphate + GMP + H(+). The protein operates within cofactor biosynthesis; adenosylcobalamin biosynthesis; adenosylcobalamin from cob(II)yrinate a,c-diamide: step 7/7. Functionally, joins adenosylcobinamide-GDP and alpha-ribazole to generate adenosylcobalamin (Ado-cobalamin). Also synthesizes adenosylcobalamin 5'-phosphate from adenosylcobinamide-GDP and alpha-ribazole 5'-phosphate. This Stutzerimonas stutzeri (strain A1501) (Pseudomonas stutzeri) protein is Adenosylcobinamide-GDP ribazoletransferase.